A 376-amino-acid polypeptide reads, in one-letter code: Queuine tRNA-ribosyltransferase accessory subunit 2 (376 aa).

Zn(2+) is bound by residues C323, C325, C328, and H354.

The protein belongs to the queuine tRNA-ribosyltransferase family. QTRT2 subfamily. As to quaternary structure, heterodimer of a catalytic subunit and an accessory subunit. Zn(2+) is required as a cofactor.

The protein localises to the cytoplasm. Functionally, non-catalytic subunit of the queuine tRNA-ribosyltransferase (TGT) that catalyzes the base-exchange of a guanine (G) residue with queuine (Q) at position 34 (anticodon wobble position) in tRNAs with GU(N) anticodons (tRNA-Asp, -Asn, -His and -Tyr), resulting in the hypermodified nucleoside queuosine (7-(((4,5-cis-dihydroxy-2-cyclopenten-1-yl)amino)methyl)-7-deazaguanosine). In Caenorhabditis briggsae, this protein is Queuine tRNA-ribosyltransferase accessory subunit 2.